The sequence spans 406 residues: MSQPITRENFDEWMIPVYAPAPFIPVRGEGSRLWDQQGKEYIDFAGGIAVNALGHAHPELREALNEQASKFWHTGNGYTNEPVLRLAKKLIDATFADRVFFCNSGAEANEAALKLARKFAHDRYGSHKSGIVAFKNAFHGRTLFTVSAGGQPAYSQDFAPLPPDIRHAAYNDINSASALIDDATCAVIVEPIQGEGGVVPASNAFLQGLRELCDRHNALLIFDEVQTGVGRTGELYAYMHYGVTPDLLTTAKALGGGFPVGALLTTEECASVMTVGTHGTTYGGNPLASAVAGKVLELINTPEMLNGVKQRHDWFVERLNTINHRYGLFSEVRGLGLLIGCVLNADYAGQAKQISQEAAKAGVMVLIAGGNVVRFAPALNVSEEEVTTGLDRFAAACEHFVSRGSS.

At lysine 252 the chain carries N6-(pyridoxal phosphate)lysine.

It belongs to the class-III pyridoxal-phosphate-dependent aminotransferase family. AstC subfamily. Pyridoxal 5'-phosphate serves as cofactor.

The enzyme catalyses N(2)-succinyl-L-ornithine + 2-oxoglutarate = N-succinyl-L-glutamate 5-semialdehyde + L-glutamate. It functions in the pathway amino-acid degradation; L-arginine degradation via AST pathway; L-glutamate and succinate from L-arginine: step 3/5. Catalyzes the transamination of N(2)-succinylornithine and alpha-ketoglutarate into N(2)-succinylglutamate semialdehyde and glutamate. Can also act as an acetylornithine aminotransferase. This chain is Succinylornithine transaminase, found in Shigella sonnei (strain Ss046).